A 230-amino-acid polypeptide reads, in one-letter code: Ribonuclease 3 (230 aa).

The RNase III domain occupies 5-125 (YSRFYNILGY…VIGAIYLDSD (121 aa)). Glu40 serves as a coordination point for Mg(2+). Asp44 is an active-site residue. Residues Asp111 and Glu114 each coordinate Mg(2+). Glu114 is an active-site residue. Residues 153–223 (DSKSKLQEIL…AEKMIEMLSQ (71 aa)) form the DRBM domain.

This sequence belongs to the ribonuclease III family. Homodimer. Mg(2+) serves as cofactor.

Its subcellular location is the cytoplasm. The catalysed reaction is Endonucleolytic cleavage to 5'-phosphomonoester.. Its function is as follows. Digests double-stranded RNA. Involved in the processing of primary rRNA transcript to yield the immediate precursors to the large and small rRNAs (23S and 16S). Processes some mRNAs, and tRNAs when they are encoded in the rRNA operon. Processes pre-crRNA and tracrRNA of type II CRISPR loci if present in the organism. This Francisella tularensis subsp. tularensis (strain WY96-3418) protein is Ribonuclease 3.